We begin with the raw amino-acid sequence, 123 residues long: Small ribosomal subunit protein uS12 (123 aa).

Residue Asp-89 is modified to 3-methylthioaspartic acid.

This sequence belongs to the universal ribosomal protein uS12 family. Part of the 30S ribosomal subunit. Contacts proteins S8 and S17. May interact with IF1 in the 30S initiation complex.

With S4 and S5 plays an important role in translational accuracy. In terms of biological role, interacts with and stabilizes bases of the 16S rRNA that are involved in tRNA selection in the A site and with the mRNA backbone. Located at the interface of the 30S and 50S subunits, it traverses the body of the 30S subunit contacting proteins on the other side and probably holding the rRNA structure together. The combined cluster of proteins S8, S12 and S17 appears to hold together the shoulder and platform of the 30S subunit. This Rhodopseudomonas palustris (strain HaA2) protein is Small ribosomal subunit protein uS12.